The sequence spans 252 residues: Cilia- and flagella-associated protein 300 (252 aa).

It belongs to the CFAP300 family.

It localises to the cytoplasm. The protein localises to the cytoskeleton. The protein resides in the cilium axoneme. In terms of biological role, cilium- and flagellum-specific protein that plays a role in axonemal structure organization and motility. Plays a role in outer and inner axonemal dynein arm assembly. In Paramecium tetraurelia, this protein is Cilia- and flagella-associated protein 300.